A 274-amino-acid chain; its full sequence is Type II restriction enzyme HgiBI (274 aa).

The protein belongs to the TdeIII type II restriction endonuclease family.

It carries out the reaction Endonucleolytic cleavage of DNA to give specific double-stranded fragments with terminal 5'-phosphates.. Its function is as follows. A P subtype restriction enzyme that recognizes the double-stranded sequence 5'-GGWCC-3' and cleaves after G-1. This system is less active than isoschizomeric RM.HgiEI. This Herpetosiphon aurantiacus (Herpetosiphon giganteus) protein is Type II restriction enzyme HgiBI.